A 418-amino-acid chain; its full sequence is Thyroid hormone receptor alpha-B (418 aa).

Residues 1–40 (MDQNLSGLDCLSEPDEKRWPDGKRKRKNSQCMGKSGMSGD) form a disordered region. Residues 1 to 60 (MDQNLSGLDCLSEPDEKRWPDGKRKRKNSQCMGKSGMSGDSLVSLPPAGYIPSYLDKDEP) are modulating. 2 NR C4-type zinc fingers span residues 61-81 (CVVCSDKATGYHYRCITCEGC) and 99-123 (CKYDGCCIIDKITRNQCQLCRFKKC). The segment at residues 61-128 (CVVCSDKATG…RFKKCIAVGM (68 aa)) is a DNA-binding region (nuclear receptor). In terms of domain architecture, NR LBD spans 171 to 415 (EEWELIRIVT…PPLFLEVFED (245 aa)).

Belongs to the nuclear hormone receptor family. NR1 subfamily. Binds to thyroid hormone receptor element (TRE) weakly as homodimers and monomers, but binds TRE with much higher affinity as heterodimers with retinoid X receptors. Can bind DNA as a heterodimer with either rxra or rxrg.

The protein resides in the nucleus. Functionally, high affinity receptor for triiodothyronine (T3). The sequence is that of Thyroid hormone receptor alpha-B (thra-b) from Xenopus laevis (African clawed frog).